A 741-amino-acid polypeptide reads, in one-letter code: MEQTYQYAWIIPFLPLPVPMLIGLGLLLFPTATKSLRRMWAFQSVLLLSIVMIFSMNLSIQQINSSSVYQYVWSWIINNDFSLEFGYLIDPLTSIMSILITTVGIMVLIYSDNYMSHDHGYLRFFAYMSFFSTSMLGLVTSSNLIQIYIFWELVGMCSYLLIGFWFTRPVAAKACQKAFVTNRVGDFGLLLGILGFYWITGSFEFRDLFQILNNLISNNEVNFVFVTLCAILLFAGAIAKSAQFPLHVWLPDAMEGPTPISALIHAATMVAAGIFPVARLMPLFIVIPHIMNFISLIGIITVFFGATLALAQKDIKRGLAYSTMSQLGYMMLALGMGSYRSALFHLITHAYSKALLFLGSGSVIHSMETLVGYCPKKSQNMVLMGGLTKHVPITKNSFLLGTLSLCGIPPLACFWSKDEILNDSWLYSPIFAIIAWSTAGLTAFYMCRIYLLTFEGHLNVHFQNYSGKRTTPLYSISLWGKEGSKISNKNFRLVTLLKMKKNGRPSFFSNKVYKMDENVINLIQPFLSIPNFGNTKTYLYPYESDNTMLFPILILILFTLFVGFLGIPFNQDVDILSKWLTPSINLLHQNSNNSIDWYEFCKDAVFSVSIAFFGIFIAFFLYKPVYSSFQNLDLINSFVKMGPKRIFSDKIKNAIYDWSYNRGYVDAFYGTFLTAGVRKLAEFTHFFDRRIIDGIPNGVGFLSFFVAEVIKSVGGGRISSYLFFYFSYVSIFLLIYYFLNL.

16 consecutive transmembrane segments (helical) span residues 9–29, 40–60, 89–109, 125–145, 147–167, 185–205, 219–239, 258–278, 284–304, 327–347, 354–374, 396–416, 425–445, 549–569, 605–625, and 721–741; these read WIIP…LLLF, WAFQ…NLSI, IDPL…MVLI, FAYM…SNLI, IYIF…FWFT, GDFG…SFEF, NEVN…GAIA, TPIS…FPVA, FIVI…TVFF, LGYM…FHLI, ALLF…VGYC, NSFL…CFWS, WLYS…TAFY, LFPI…GIPF, VFSV…YKPV, and YLFF…FLNL.

This sequence belongs to the complex I subunit 5 family. In terms of assembly, NDH is composed of at least 16 different subunits, 5 of which are encoded in the nucleus.

The protein resides in the plastid. Its subcellular location is the chloroplast thylakoid membrane. It carries out the reaction a plastoquinone + NADH + (n+1) H(+)(in) = a plastoquinol + NAD(+) + n H(+)(out). The catalysed reaction is a plastoquinone + NADPH + (n+1) H(+)(in) = a plastoquinol + NADP(+) + n H(+)(out). In terms of biological role, NDH shuttles electrons from NAD(P)H:plastoquinone, via FMN and iron-sulfur (Fe-S) centers, to quinones in the photosynthetic chain and possibly in a chloroplast respiratory chain. The immediate electron acceptor for the enzyme in this species is believed to be plastoquinone. Couples the redox reaction to proton translocation, and thus conserves the redox energy in a proton gradient. The chain is NAD(P)H-quinone oxidoreductase subunit 5, chloroplastic (ndhF) from Guizotia abyssinica (Niger).